A 229-amino-acid chain; its full sequence is Uracil-DNA glycosylase (229 aa).

Residue Asp64 is the Proton acceptor of the active site.

It belongs to the uracil-DNA glycosylase (UDG) superfamily. UNG family.

It localises to the cytoplasm. It carries out the reaction Hydrolyzes single-stranded DNA or mismatched double-stranded DNA and polynucleotides, releasing free uracil.. In terms of biological role, excises uracil residues from the DNA which can arise as a result of misincorporation of dUMP residues by DNA polymerase or due to deamination of cytosine. This is Uracil-DNA glycosylase from Escherichia coli O45:K1 (strain S88 / ExPEC).